We begin with the raw amino-acid sequence, 325 residues long: Pyruvate dehydrogenase E1 component subunit beta (325 aa).

Glu-60 contacts thiamine diphosphate.

As to quaternary structure, heterodimer of an alpha and a beta chain. Thiamine diphosphate serves as cofactor.

The enzyme catalyses N(6)-[(R)-lipoyl]-L-lysyl-[protein] + pyruvate + H(+) = N(6)-[(R)-S(8)-acetyldihydrolipoyl]-L-lysyl-[protein] + CO2. Functionally, the pyruvate dehydrogenase complex catalyzes the overall conversion of pyruvate to acetyl-CoA and CO(2). It contains multiple copies of three enzymatic components: pyruvate dehydrogenase (E1), dihydrolipoamide acetyltransferase (E2) and lipoamide dehydrogenase (E3). This chain is Pyruvate dehydrogenase E1 component subunit beta (pdhB), found in Staphylococcus aureus (strain Mu50 / ATCC 700699).